A 467-amino-acid chain; its full sequence is Tripartite motif-containing protein 75 (467 aa).

An RING-type zinc finger spans residues 16 to 57; that stretch reads CPICLDDLTDPVTVECGHNFCRSCIKDFWAGQQATSSCPVCR. The B box-type zinc finger occupies 90-131; it reads ESSTSCERHNQALTLFCEDDLQLLCDQCVEPESHGRHQVLSI. C95, H98, C117, and H123 together coordinate Zn(2+). Residues 168–222 are a coiled coil; the sequence is VTLREQAEAQRSQLTSECEKLMRFLDQEERAAFSRLEDEEMRLEKRLLDNIAALE. The region spanning 276-466 is the B30.2/SPRY domain; the sequence is YSFPLQYSAL…LRLCSATDSE (191 aa).

The protein belongs to the TRIM/RBCC family.

It is found in the cytoplasm. It localises to the cytoskeleton. The protein resides in the spindle. May play a role in female meiosis. The protein is Tripartite motif-containing protein 75 of Mus musculus (Mouse).